Reading from the N-terminus, the 950-residue chain is Oxysterol-binding protein-related protein 1 (950 aa).

An interaction with RAB7A region spans residues 1 to 237 (MNTEAEQQLL…NKVIYKALKR (237 aa)). ANK repeat units lie at residues 47–76 (LGWTPLHLACYFGHRQVVQDLLKAGAEVNV), 80–109 (MGDTPLHRAAFTGRKELVMLLLEYNADTTI), and 175–204 (LGNTPLHCAAYRAHKQCALKLLRSGADPNL). The PH domain occupies 235–334 (LKRYEGPLWK…WLEAIEEHSA (100 aa)). Residues 430–463 (NFKLEQEQEKNKILSEALETLATEHHELEQSLVK) are a coiled coil. The FFAT motif lies at 469–485 (SILSEDEFYDALSDSES). At serine 499 the chain carries Phosphoserine. Residues 501-521 (EEEGEHLGSRKHRMSEEKDCG) are compositionally biased toward basic and acidic residues. 3 disordered regions span residues 501–527 (EEEGEHLGSRKHRMSEEKDCGGGDALS), 795–816 (KKNTEEKKNSKQMSTSEELDEM), and 881–913 (MENGEIDQASEEKKRLEEKQRAARKNRSKSEED). Residues 877–913 (DIRAMENGEIDQASEEKKRLEEKQRAARKNRSKSEED) are a coiled coil. Residues 890–901 (SEEKKRLEEKQR) are compositionally biased toward basic and acidic residues.

Belongs to the OSBP family. Interacts (via FFAT motif) with VAPA and VAPB. Interacts with the GTP-bound form of RAB7A. Interacts with OAS1B. Interacts (via FFAT motif) with MOSPD2 (via MSP domain).

Its subcellular location is the late endosome. Functionally, binds phospholipids; exhibits strong binding to phosphatidic acid and weak binding to phosphatidylinositol 3-phosphate. Stabilizes GTP-bound RAB7A on late endosomes/lysosomes and alters functional properties of late endocytic compartments via its interaction with RAB7A. Binds 25-hydroxycholesterol and cholesterol. The chain is Oxysterol-binding protein-related protein 1 from Homo sapiens (Human).